The chain runs to 133 residues: MRCRVYYEDTDSEGVVYHANYLKYCERARSEFFFKQNVLPENEEGVFVIRSIKADFFTPASLGQVLEIRTQIKELRKVFVVLFQEIYCIQNASLEPMKPFKVFASEIKFGFVNRSTYSPIAIPKLFKELLNAI.

Asp-11 is an active-site residue.

Belongs to the 4-hydroxybenzoyl-CoA thioesterase family. In terms of assembly, homotetramer. May interact with CagA.

Its function is as follows. Thioesterase that may be involved in phospholipid metabolism. Displays acyl-CoA thioesterase activity with lauroyl-CoA (C12:0), myristoyl-CoA (C14:0), palmitoyl-CoA (C16:0), stearoyl-CoA (C18:0) and benzoyl-CoA, catalyzing the hydrolysis of the thioester bond. Has low activity with butyryl-CoA and octanoyl-CoA. This is Acyl-CoA thioesterase YbgC (ybgC) from Helicobacter pylori (strain ATCC 700392 / 26695) (Campylobacter pylori).